Consider the following 300-residue polypeptide: Transcription initiation factor IIB (300 aa).

Residues 3–34 form a TFIIB-type zinc finger; it reads KQRVCPVCGSTEFIYDPERGEIVCARCGYVIE. Residues Cys-7, Cys-10, Cys-26, and Cys-29 each contribute to the Zn(2+) site. 2 tandem repeats follow at residues 114-197 and 210-291.

The protein belongs to the TFIIB family.

Its function is as follows. Stabilizes TBP binding to an archaeal box-A promoter. Also responsible for recruiting RNA polymerase II to the pre-initiation complex (DNA-TBP-TFIIB). The chain is Transcription initiation factor IIB from Pyrococcus abyssi (strain GE5 / Orsay).